The primary structure comprises 477 residues: MAEETGALPSRTDFSAWYNEVIRRADIMDVRYPVKGLYVWYPFGFALRNHTYTLLRSLLNRDHEETLFPLLIPETEFMKEAEHIKGFEDEVYWVTHGGLSPLDVKLALRPTSETAIYPMYALWVRSHADLPLKLYQVVNTFRYETKHTRPLIRLREITSFMESHTVHTDWDDANKQVEYELGLATEFYRDLGVPIIISRRPDWDKFPGADFTMAIDAVMPDGRTLQIGTVHHLGDHFSTTYNITYEDVNGEQKLASQTCFGISERCIAAIIAVHGDDKGLVLPATVAPTQVVIIPIIVGKRGDEIMAAVEKLESELKAAGLRVKTDARDMRPGAKYYHWELHGVPLRVELGPRDLDNNQLVCANRLGVKTTIPRENAADSVKRLLDEAHDQILEKAEDHLSSHLKTVKTVDECNQSLEENIVIVHWCGEKACADKLEELTNSSLLGTGVRSKYVVDDEGPCIVCGKPGKTALVGRSY.

Belongs to the class-II aminoacyl-tRNA synthetase family. ProS type 3 subfamily. In terms of assembly, homodimer.

It localises to the cytoplasm. The catalysed reaction is tRNA(Pro) + L-proline + ATP = L-prolyl-tRNA(Pro) + AMP + diphosphate. In terms of biological role, catalyzes the attachment of proline to tRNA(Pro) in a two-step reaction: proline is first activated by ATP to form Pro-AMP and then transferred to the acceptor end of tRNA(Pro). The sequence is that of Proline--tRNA ligase from Methanocorpusculum labreanum (strain ATCC 43576 / DSM 4855 / Z).